The following is a 154-amino-acid chain: Immunity protein YwqK (154 aa).

In terms of assembly, probably interacts with cognate toxin YwqJ but not with other non-cognate LXG toxins. The interaction inhibits the toxic activity of YwqJ.

It is found in the cytoplasm. Immunity component of one of 6 LXG toxin-immunity modules in this strain. They promote kin selection, mediate competition in biofilms, and drive spatial segregation of different strains, indicating that LXG toxins may help avoid warfare between strains in biofilms. Mediates intercellular competition during biofilm formation; disruption of the operon disadvantages the bacteria, but overexpression of the cognate immunity protein restores growth in competition with wild-type. In situ neutralizes the toxic effect of cognate toxin YqcG. Probably neutralizes the ability to inhibit growth of cognate toxin YwqJ. Probably does not have immunity protein activity on other LXG toxins. In Bacillus subtilis (strain 168), this protein is Immunity protein YwqK (ywqK).